A 503-amino-acid polypeptide reads, in one-letter code: Cytochrome P450 monooxygenase lnbC (503 aa).

A helical membrane pass occupies residues 14–34 (VVLLLSSVWIAVHLVLAAYNV). Residues Asn-94 and Asn-169 are each glycosylated (N-linked (GlcNAc...) asparagine). Cys-446 is a heme binding site.

This sequence belongs to the cytochrome P450 family. The cofactor is heme.

The protein resides in the membrane. The protein operates within secondary metabolite biosynthesis. Functionally, cytochrome P450 monooxygenase; part of the lnb gene cluster that mediates the biosynthesis of diastereomeric piperazines. Lna and lnb clusters encode sets of enzymes that produce overlapping sets of previously undescribed metabolites such as piperazinomycin-like metabolites or morpholine. The lna and lnb biosynthetic pathways appear to be part of a signaling network that controls the formation of sclerotia, a resilient overwintering structure. One primary function of the non-canonical nonribosomal peptide synthetases lnaA and lnbA consists in the reduction of L-tyrosine. The presence in the clusters of tailoring enzymes such as the oxidoreductases lnaB, lnbB, lnaE or lnbE, as well as of the cytochrome P450 monooxygenases lnaC, lnaD, or lnbC, might explain formation of various diastereomeric piperazines. The sequence is that of Cytochrome P450 monooxygenase lnbC from Aspergillus flavus (strain ATCC 200026 / FGSC A1120 / IAM 13836 / NRRL 3357 / JCM 12722 / SRRC 167).